A 351-amino-acid chain; its full sequence is Porphobilinogen deaminase (351 aa).

An S-(dipyrrolylmethanemethyl)cysteine modification is found at Cys-242. An RPE1 insert domain is found at 257-306 (PRHLSKLAYREVLEGNTEALATAAYKSNRTDASTGLTYKLPLEVEFGKVS).

The protein belongs to the HMBS family. Monomer. Dipyrromethane is required as a cofactor.

The catalysed reaction is 4 porphobilinogen + H2O = hydroxymethylbilane + 4 NH4(+). It participates in porphyrin-containing compound metabolism; protoporphyrin-IX biosynthesis; coproporphyrinogen-III from 5-aminolevulinate: step 2/4. Its function is as follows. Tetrapolymerization of the monopyrrole PBG into the hydroxymethylbilane pre-uroporphyrinogen in several discrete steps. The sequence is that of Porphobilinogen deaminase from Rickettsia conorii (strain ATCC VR-613 / Malish 7).